The sequence spans 601 residues: Protein FREE1 (601 aa).

Residues 1–240 (MQQGDYNSYY…SGEYPAFEDS (240 aa)) are disordered. Pro residues predominate over residues 21-35 (TPNPNPNPNPSPPAP). Composition is skewed to polar residues over residues 63–79 (DYSN…QNSE) and 125–155 (LSSY…QHQT). Over residues 161–175 (APPPSSAPAPNPNPA) the composition is skewed to pro residues. Residues 176-197 (PYSSSLYSAPPYSSGGSSIPPS) show a composition bias toward low complexity. Basic and acidic residues predominate over residues 214–231 (NRSRSDLGSDLYGKRSDS). S218 is modified (phosphoserine). The interval 338–344 (LDGLRML) is nuclear export signal. Residues 455–515 (DEAVSKCTSC…VCDRCMAEVS (61 aa)) form an FYVE-type zinc finger. C461, C464, C477, C480, C485, C488, C507, and C510 together coordinate Zn(2+). The stretch at 527–552 (RNVSLQSHEDLARKLQEEMERNRKSS) forms a coiled coil. 2 positions are modified to phosphoserine: S530 and S533. A disordered region spans residues 542–561 (QEEMERNRKSSSGLREGSGR).

In terms of assembly, part of the ESCRT-I complex. Interacts with VPS23A and VPS23B, but not with VPS28 or VPS37. Interacts with IRT1. Interacts with SH3P2. Interacts with SH3P3, but not with SH3P1. Interacts (via N-terminus) with PYL4 and PYR3. Interacts (via C-terminus) with SNRK2D/SNRK2.2, SNRK2I/SNRK2.3, ABF4 and ABI5. Interacts with SINAT1, SINAT2, SINAT3 and SINAT4. Interacts with SINAT5. Component of a phosphoinositide 3-kinase (PI3K) complex containing ATG6, SH3P2 and FREE1. Phosphorylated at Ser-530 and Ser-533 by SNRK2D/SNRK2.2 and SNRK2I/SNRK2.3 in response to abscisic acid (ABA). Phosphorylation is necessary for ABA-induced FREE1 nuclear import. In terms of processing, ubiquitinated by SINAT1, SINAT2, SINAT3 and SINAT4 for subsequent proteasomal degradation. As to expression, ubiquitous. Lowest expression in mature seeds.

Its subcellular location is the cytoplasm. It is found in the prevacuolar compartment membrane. It localises to the late endosome. The protein localises to the endosome. The protein resides in the multivesicular body. Its subcellular location is the nucleus. Its function is as follows. Endosomal sorting complex required for transport (ESCRT) component regulating multivesicular body (MVB) protein sorting and plant growth. Required for the formation of intra-luminal vesicles (ILVs)in MVBs. Binds to phosphatidylinositol-3-phosphate (PI3P) and ubiquitin. Controls IRT1 recycling to the plasma membrane and impacts the polar delivery of this transporter to the outer plasma membrane domain. Regulates ubiquitin-dependent membrane protein degradation, vacuolar transport, autophagy, and vacuole biogenesis. ESCRT component that binds ubiquitin and regulates vacuolar sorting of proteins. Attenuates abscisic acid (ABA) signaling through RSL1-triggered degradation of the ABA receptors PYR1 and PYL4. Interacts with PYL4 and PYR1, and delivers the ubiquitinated ABA receptors as cargo to the vacuolar degradation pathway. In response to ABA, is phosphorylated by SnRK2 kinases which mediate FREE1 nuclear import. In the nucleus, interacts with the ABA-responsive transcription factors ABF4 and ABI5 to reduce their ability to bind to their cis-regulatory sequences of downstream genes, thus leading to transcriptional inhibition of ABA signaling pathway. Negatively regulates salt stress tolerance via a negative feedback loop involving ABA signaling pathway. This is Protein FREE1 from Arabidopsis thaliana (Mouse-ear cress).